We begin with the raw amino-acid sequence, 122 residues long: MIQMQTNLDVADNSGARRVQCIKVLGGSHRRYASVGDIIVVSVKEAIPRGRVKKGDVRKAVVVRTAKEVKREDGTSIRFDRNAAVILNNQGEPVGTRIFGPVVRELRAKNFMKIISLAPEVL.

It belongs to the universal ribosomal protein uL14 family. Part of the 50S ribosomal subunit. Forms a cluster with proteins L3 and L19. In the 70S ribosome, L14 and L19 interact and together make contacts with the 16S rRNA in bridges B5 and B8.

In terms of biological role, binds to 23S rRNA. Forms part of two intersubunit bridges in the 70S ribosome. This Paracoccus denitrificans (strain Pd 1222) protein is Large ribosomal subunit protein uL14.